The following is a 976-amino-acid chain: Vacuolar membrane protease (976 aa).

Residues 1-15 lie on the Cytoplasmic side of the membrane; that stretch reads MKLKSVFRSVLKYRK. A helical transmembrane segment spans residues 16–36; that stretch reads TNLSLLLLITYSIITLLYIFD. Residues 37–359 are Vacuolar-facing; sequence HERYKLNLPK…KFFVISAKTL (323 aa). Residues Asn-96 and Asn-121 are each glycosylated (N-linked (GlcNAc...) asparagine). Positions 156 and 168 each coordinate Zn(2+). The N-linked (GlcNAc...) asparagine glycan is linked to Asn-189. The Proton acceptor role is filled by Glu-200. Glu-201 is a Zn(2+) binding site. N-linked (GlcNAc...) asparagine glycans are attached at residues Asn-212 and Asn-217. Zn(2+)-binding residues include Glu-226 and His-300. A helical membrane pass occupies residues 360-380; sequence FYWNCIFLLVSPVVAIGLYLI. Over 381 to 392 the chain is Cytoplasmic; sequence SRDRMTWKSHSW. The chain crosses the membrane as a helical span at residues 393 to 412; sequence LSWTRFPLSLAAGIIVQKLF. Over 413 to 428 the chain is Vacuolar; it reads SNDIIRSNPLTFSRNY. A helical membrane pass occupies residues 429-449; sequence FWPISAFFTQVIFTSYVLINC. The Cytoplasmic portion of the chain corresponds to 450–461; that stretch reads SNFFFPCADMKS. The helical transmembrane segment at 462 to 482 threads the bilayer; that stretch reads LSIIELFIILWTILLFTSKLL. The Vacuolar portion of the chain corresponds to 483-496; that stretch reads YSSDYRYTGLYPLS. Residues 497-517 traverse the membrane as a helical segment; the sequence is IFFLLSTIAAILRLLALALGM. Over 518–627 the chain is Cytoplasmic; sequence RTRKRLGREC…NSLKLEYTDY (110 aa). The disordered stretch occupies residues 528–610; it reads RDHHSNYSSH…PLLKGSNSME (83 aa). The span at 549 to 558 shows a compositional bias: polar residues; sequence NLEQPQDQFT. The span at 559–570 shows a compositional bias: low complexity; sequence SSQDDQASIQDD. Basic and acidic residues predominate over residues 582–601; it reads NVDEDHGMDSSSQQHDERVP. Residues 628–648 traverse the membrane as a helical segment; it reads AWIIQFLLIVPIPSFILFNSV. At 649-668 the chain is on the vacuolar side; that stretch reads DVIMDALNHTVQEGSKATFD. N-linked (GlcNAc...) asparagine glycosylation is present at Asn-656. A helical transmembrane segment spans residues 669-689; that stretch reads VLRFGMVGSILMALPILPFFY. At 690–692 the chain is on the cytoplasmic side; the sequence is KVN. Residues 693–713 form a helical membrane-spanning segment; the sequence is YITISLTALLFLISASKTLLV. Residues 714–976 are Vacuolar-facing; the sequence is HPFTNSNPLK…LVIVKDAIIL (263 aa). Residues Asn-768, Asn-796, Asn-811, Asn-866, and Asn-937 are each glycosylated (N-linked (GlcNAc...) asparagine).

This sequence belongs to the peptidase M28 family. The cofactor is Zn(2+).

Its subcellular location is the vacuole membrane. May be involved in vacuolar sorting and osmoregulation. This is Vacuolar membrane protease from Saccharomyces cerevisiae (strain YJM789) (Baker's yeast).